The chain runs to 458 residues: Hepatocyte nuclear factor 3-beta (458 aa).

The transactivation domain 1 stretch occupies residues 14–93; the sequence is DWSSYYAEPE…AGAMAGMSGS (80 aa). The short motif at 106–113 is the Nuclear localization signal element; sequence LSPSLSPL. Thr156 carries the post-translational modification Phosphothreonine; by PKB/AKT1. The fork-head DNA-binding region spans 159–252; it reads KPPYSYISLI…ENGCYLRRQK (94 aa). 2 positions are modified to phosphoserine: Ser212 and Ser283. The disordered stretch occupies residues 286 to 365; it reads QLGEAAGSAS…PGLPPEAHLK (80 aa). Residues 294–310 show a composition bias toward polar residues; sequence ASETPAGTESPHSSASP. The residue at position 301 (Thr301) is a Phosphothreonine. 4 positions are modified to phosphoserine: Ser303, Ser306, Ser307, and Ser309. The segment covering 339–352 has biased composition (low complexity); that stretch reads PGQQQQAAAHLLGP. The segment at 361–458 is transactivation domain 2; it reads EAHLKPEHHY…VYSRPIMNSS (98 aa). Phosphoserine occurs at positions 437 and 458.

As to quaternary structure, binds DNA as a monomer. Binds TLE1. Interacts with FOXA1 and FOXA3. Interacts with PRKDC. Interacts with AKT1. Interacts with TET1; this interaction may recruit TET1 to specific genomic loci to mediate their demethylation. Post-translationally, phosphorylation on Thr-156 abolishes binding to target promoters and subsequent transcription activation upon insulin stimulation. In terms of tissue distribution, liver.

It localises to the nucleus. It is found in the cytoplasm. Transcription factor that is involved in embryonic development, establishment of tissue-specific gene expression and regulation of gene expression in differentiated tissues. Is thought to act as a 'pioneer' factor opening the compacted chromatin for other proteins through interactions with nucleosomal core histones and thereby replacing linker histones at target enhancer and/or promoter sites. Binds DNA with the consensus sequence 5'-[AC]A[AT]T[AG]TT[GT][AG][CT]T[CT]-3'. In embryonic development is required for notochord formation. Involved in the development of multiple endoderm-derived organ systems such as the liver, pancreas and lungs; FOXA1 and FOXA2 seem to have at least in part redundant roles. Originally described as a transcription activator for a number of liver genes such as AFP, albumin, tyrosine aminotransferase, PEPCK, etc. Interacts with the cis-acting regulatory regions of these genes. Involved in glucose homeostasis; regulates the expression of genes important for glucose sensing in pancreatic beta-cells and glucose homeostasis. Involved in regulation of fat metabolism. Acts synergistically with ONECUT1 to activate transcription of female-specific CYP2C12; the function is inhibited by growth hormone-activated STAT5B. Acts synergistically with HNF4A to activate transcription of APOA1. The polypeptide is Hepatocyte nuclear factor 3-beta (Foxa2) (Rattus norvegicus (Rat)).